Consider the following 205-residue polypeptide: SREBP regulating gene protein (205 aa).

The Cytoplasmic segment spans residues 1 to 16 (MALYVSMVWRKILRKR). The helical transmembrane segment at 17 to 35 (WVLGVVFGLSLIYFLTSTF) threads the bilayer. At 36 to 205 (KQEERTVRDR…GESPPELLPI (170 aa)) the chain is on the lumenal side. Residue N67 is glycosylated (N-linked (GlcNAc...) asparagine).

This sequence belongs to the SPRING family.

It localises to the golgi apparatus membrane. Functionally, positively regulates hepatic SREBP signaling pathway by modulating the proper localization of SCAP (SREBP cleavage-activating protein) to the endoplasmic reticulum, thereby controlling the level of functional SCAP. The chain is SREBP regulating gene protein from Xenopus laevis (African clawed frog).